The following is a 300-amino-acid chain: Lysophosphatidic acid:oleoyl-CoA acyltransferase 1 (300 aa).

The helical transmembrane segment at 33 to 53 threads the bilayer; sequence LLGILGVKTIIMLPLIMLYLL. The short motif at 101 to 106 is the HXXXXD motif element; the sequence is CTSPLD.

It belongs to the 1-acyl-sn-glycerol-3-phosphate acyltransferase family.

It localises to the lipid droplet. The protein localises to the endoplasmic reticulum membrane. The catalysed reaction is a 1-acyl-sn-glycero-3-phosphate + an acyl-CoA = a 1,2-diacyl-sn-glycero-3-phosphate + CoA. It catalyses the reaction 1-hexadecanoyl-sn-glycero-3-phosphate + (9Z)-octadecenoyl-CoA = 1-hexadecanoyl-2-(9Z-octadecenoyl)-sn-glycero-3-phosphate + CoA. In terms of biological role, acyl-CoA-dependent lysophosphatidic acid acyltransferase with preference for oleoyl-CoA. Involved in triacylglyceride homeostasis and lipid droplet formation. Involved in vacuolar protein sorting. In Saccharomyces cerevisiae (strain ATCC 204508 / S288c) (Baker's yeast), this protein is Lysophosphatidic acid:oleoyl-CoA acyltransferase 1.